Here is a 401-residue protein sequence, read N- to C-terminus: Cysteine desulfurase (401 aa).

Pyridoxal 5'-phosphate-binding positions include 72–73, asparagine 151, glutamine 179, and 199–201; these read AT and SAH. Lysine 202 is modified (N6-(pyridoxal phosphate)lysine). A pyridoxal 5'-phosphate-binding site is contributed by threonine 237. The active-site Cysteine persulfide intermediate is the cysteine 324. Position 324 (cysteine 324) interacts with [2Fe-2S] cluster.

It belongs to the class-V pyridoxal-phosphate-dependent aminotransferase family. NifS/IscS subfamily. In terms of assembly, homodimer. The cofactor is pyridoxal 5'-phosphate.

The catalysed reaction is (sulfur carrier)-H + L-cysteine = (sulfur carrier)-SH + L-alanine. Its function is as follows. Catalyzes the removal of elemental sulfur atoms from cysteine to produce alanine. Seems to participate in the biosynthesis of the nitrogenase metalloclusters by providing the inorganic sulfur required for the Fe-S core formation. This chain is Cysteine desulfurase, found in Enterobacter agglomerans (Erwinia herbicola).